The chain runs to 20 residues: Outer membrane protein 40Va (20 aa).

Belongs to the Gram-negative porin family. As to quaternary structure, homotrimer.

It localises to the cell outer membrane. Functionally, forms pores that allow passive diffusion of small molecules across the outer membrane. The sequence is that of Outer membrane protein 40Va from Vibrio alginolyticus.